The sequence spans 172 residues: MDLKSKIRQIEGFPKEGISFKDITTVLKEGEALQYVTDQLTEQLKDLNIDIIVGPEARGFLVGTPVAYKLGVGFVPVRKPGKLPAETLTYEYELEYGTDSLQIHKDSIRPGQRVAIVDDLLATGGTVLATAKMVEALGGQVVSMNFLIELTGLKGRDILKGYEIKSLVEYEF.

The protein belongs to the purine/pyrimidine phosphoribosyltransferase family. In terms of assembly, homodimer.

It is found in the cytoplasm. It carries out the reaction AMP + diphosphate = 5-phospho-alpha-D-ribose 1-diphosphate + adenine. Its pathway is purine metabolism; AMP biosynthesis via salvage pathway; AMP from adenine: step 1/1. Functionally, catalyzes a salvage reaction resulting in the formation of AMP, that is energically less costly than de novo synthesis. This chain is Adenine phosphoribosyltransferase, found in Alkaliphilus oremlandii (strain OhILAs) (Clostridium oremlandii (strain OhILAs)).